Here is a 332-residue protein sequence, read N- to C-terminus: dTDP-3,4-didehydro-2,6-dideoxy-alpha-D-glucose 3-reductase (332 aa).

Position 12 to 18 (12 to 18) interacts with NADP(+); the sequence is CASFAWR. Arg19 provides a ligand contact to substrate. NADP(+) contacts are provided by residues 37–38, Tyr58, Leu74, and His79; that span reads SR. The Proton donor role is filled by Lys97. Residues Arg165 and Asp177 each contribute to the NADP(+) site. Residues Tyr235 and Thr255 each contribute to the substrate site.

The protein belongs to the Gfo/Idh/MocA family. As to quaternary structure, monomer.

It carries out the reaction dTDP-4-dehydro-2,6-dideoxy-alpha-D-glucose + NADP(+) = dTDP-3,4-didehydro-2,6-dideoxy-alpha-D-glucose + NADPH + H(+). In terms of biological role, involved in the biosynthesis of forosamine ((4-dimethylamino)-2,3,4,6-tetradeoxy-alpha-D-threo-hexopyranose), a highly deoxygenated sugar component of several bioactive natural products such as the insecticidal spinosyns A and D. Catalyzes the reduction of the C-3 keto moiety of dTDP-3,4-diketo-2,6-dideoxy-alpha-D-glucose to yield dTDP-4-keto-2,6-dideoxy-alpha-D-glucose. NADPH is the better reductant, however NADH can also be used. The polypeptide is dTDP-3,4-didehydro-2,6-dideoxy-alpha-D-glucose 3-reductase (Saccharopolyspora spinosa).